The primary structure comprises 267 residues: 27 kDa core protein (267 aa).

It belongs to the chordopoxvirinae D3 family.

It localises to the virion. Late protein which is part of a large complex required for early virion morphogenesis. This complex participates in the formation of virosomes and the incorporation of virosomal contents into nascent immature virions. The chain is 27 kDa core protein from Canarypox virus (CNPV).